The following is a 534-amino-acid chain: Zinc finger protein 671 (534 aa).

In terms of domain architecture, KRAB spans 49-120 (VVFEDVFVYF…DQVDMTSATE (72 aa)). The segment at 192 to 214 (YLCGACGKQFWFSTDFDQHQNQP) adopts a C2H2-type 1; degenerate zinc-finger fold. C2H2-type zinc fingers lie at residues 285-307 (HRCG…QRIH), 313-335 (YECN…QTVH), 341-363 (YECS…RRVH), 369-391 (YQCG…QEVH), 397-419 (YVCS…QRTH), 425-447 (YECS…WRIH), 451-473 (YECS…QKVH), 479-501 (YECS…WKVH), and 507-529 (YVCS…QRVH).

The protein belongs to the krueppel C2H2-type zinc-finger protein family.

Its subcellular location is the nucleus. May be involved in transcriptional regulation. The sequence is that of Zinc finger protein 671 (ZNF671) from Homo sapiens (Human).